A 492-amino-acid chain; its full sequence is Probable cytosol aminopeptidase (492 aa).

2 residues coordinate Mn(2+): Lys-248 and Asp-253. The active site involves Lys-260. Mn(2+) contacts are provided by Asp-271, Asp-330, and Glu-332. Residue Arg-334 is part of the active site.

The protein belongs to the peptidase M17 family. Requires Mn(2+) as cofactor.

The protein resides in the cytoplasm. It catalyses the reaction Release of an N-terminal amino acid, Xaa-|-Yaa-, in which Xaa is preferably Leu, but may be other amino acids including Pro although not Arg or Lys, and Yaa may be Pro. Amino acid amides and methyl esters are also readily hydrolyzed, but rates on arylamides are exceedingly low.. The catalysed reaction is Release of an N-terminal amino acid, preferentially leucine, but not glutamic or aspartic acids.. Functionally, presumably involved in the processing and regular turnover of intracellular proteins. Catalyzes the removal of unsubstituted N-terminal amino acids from various peptides. In Aeropyrum pernix (strain ATCC 700893 / DSM 11879 / JCM 9820 / NBRC 100138 / K1), this protein is Probable cytosol aminopeptidase (pepA).